The primary structure comprises 937 residues: Isoleucine--tRNA ligase (937 aa).

The short motif at 57 to 67 (PYANGPIHMGH) is the 'HIGH' region element. Glu-556 lines the L-isoleucyl-5'-AMP pocket. Positions 597–601 (KMSKS) match the 'KMSKS' region motif. Position 600 (Lys-600) interacts with ATP. Zn(2+)-binding residues include Cys-895, Cys-898, Cys-915, and Cys-918.

This sequence belongs to the class-I aminoacyl-tRNA synthetase family. IleS type 1 subfamily. As to quaternary structure, monomer. It depends on Zn(2+) as a cofactor.

Its subcellular location is the cytoplasm. The catalysed reaction is tRNA(Ile) + L-isoleucine + ATP = L-isoleucyl-tRNA(Ile) + AMP + diphosphate. Its function is as follows. Catalyzes the attachment of isoleucine to tRNA(Ile). As IleRS can inadvertently accommodate and process structurally similar amino acids such as valine, to avoid such errors it has two additional distinct tRNA(Ile)-dependent editing activities. One activity is designated as 'pretransfer' editing and involves the hydrolysis of activated Val-AMP. The other activity is designated 'posttransfer' editing and involves deacylation of mischarged Val-tRNA(Ile). The protein is Isoleucine--tRNA ligase of Levilactobacillus brevis (strain ATCC 367 / BCRC 12310 / CIP 105137 / JCM 1170 / LMG 11437 / NCIMB 947 / NCTC 947) (Lactobacillus brevis).